Reading from the N-terminus, the 217-residue chain is MKIVIADDHAVVRTGFSMILNYQNDMEVVATAADGVEAYQKVMEYKPDVLLMDLSMPPGESGLIATSKIADSFPETKILILTMFDDEEYLFHVLRNGAKGYILKNAPDEQLLLAIRTVYKGETYVDMKLTTSLVNEFVSNSNQDTANTTDPFKILSKRELEILPLIAKGYGNKEIAEKLFVSVKTVEAHKTHIMTKLGLKSKPELVEYALKKKLLEF.

One can recognise a Response regulatory domain in the interval Lys-2–Tyr-119. Position 53 is a 4-aspartylphosphate (Asp-53). Residues Thr-148 to Lys-213 enclose the HTH luxR-type domain. Positions Asn-172–Thr-191 form a DNA-binding region, H-T-H motif.

Phosphorylated by NreB.

It localises to the cytoplasm. Functionally, member of the two-component regulatory system NreB/NreC involved in the control of dissimilatory nitrate/nitrite reduction in response to oxygen. Phosphorylated NreC binds to a GC-rich palindromic sequence at the promoters of the nitrate (narGHJI) and nitrite (nir) reductase operons, as well as the putative nitrate transporter gene narT, and activates their expression. The protein is Oxygen regulatory protein NreC (nreC) of Staphylococcus aureus (strain USA300 / TCH1516).